We begin with the raw amino-acid sequence, 165 residues long: Interferon gamma (165 aa).

An N-terminal signal peptide occupies residues 1 to 23 (MKYTSYILAFQLCIVLGSLGCYC). Gln-24 carries the post-translational modification Pyrrolidone carboxylic acid. 2 N-linked (GlcNAc...) asparagine glycosylation sites follow: Asn-48 and Asn-120.

It belongs to the type II (or gamma) interferon family. Homodimer. Interacts with IFNGR1 (via extracellular domain); this interaction promotes IFNGR1 dimerization. In terms of tissue distribution, released primarily from activated T lymphocytes.

It is found in the secreted. Functionally, type II interferon produced by immune cells such as T-cells and NK cells that plays crucial roles in antimicrobial, antiviral, and antitumor responses by activating effector immune cells and enhancing antigen presentation. Primarily signals through the JAK-STAT pathway after interaction with its receptor IFNGR1 to affect gene regulation. Upon IFNG binding, IFNGR1 intracellular domain opens out to allow association of downstream signaling components JAK2, JAK1 and STAT1, leading to STAT1 activation, nuclear translocation and transcription of IFNG-regulated genes. Many of the induced genes are transcription factors such as IRF1 that are able to further drive regulation of a next wave of transcription. Plays a role in class I antigen presentation pathway by inducing a replacement of catalytic proteasome subunits with immunoproteasome subunits. In turn, increases the quantity, quality, and repertoire of peptides for class I MHC loading. Increases the efficiency of peptide generation also by inducing the expression of activator PA28 that associates with the proteasome and alters its proteolytic cleavage preference. Up-regulates as well MHC II complexes on the cell surface by promoting expression of several key molecules such as cathepsins B/CTSB, H/CTSH, and L/CTSL. Participates in the regulation of hematopoietic stem cells during development and under homeostatic conditions by affecting their development, quiescence, and differentiation. This Cercocebus atys (Sooty mangabey) protein is Interferon gamma (IFNG).